Consider the following 589-residue polypeptide: Aspartate--tRNA(Asp/Asn) ligase (589 aa).

Glutamate 176 is a binding site for L-aspartate. An aspartate region spans residues 200 to 203 (QLFK). Arginine 222 provides a ligand contact to L-aspartate. ATP contacts are provided by residues 222-224 (RDE) and glutamine 231. Residue histidine 450 coordinates L-aspartate. Glutamate 484 is a binding site for ATP. Arginine 491 serves as a coordination point for L-aspartate. ATP is bound at residue 536–539 (GLDR).

This sequence belongs to the class-II aminoacyl-tRNA synthetase family. Type 1 subfamily. Homodimer.

The protein resides in the cytoplasm. The enzyme catalyses tRNA(Asx) + L-aspartate + ATP = L-aspartyl-tRNA(Asx) + AMP + diphosphate. In terms of biological role, aspartyl-tRNA synthetase with relaxed tRNA specificity since it is able to aspartylate not only its cognate tRNA(Asp) but also tRNA(Asn). Reaction proceeds in two steps: L-aspartate is first activated by ATP to form Asp-AMP and then transferred to the acceptor end of tRNA(Asp/Asn). This chain is Aspartate--tRNA(Asp/Asn) ligase, found in Bacillus cytotoxicus (strain DSM 22905 / CIP 110041 / 391-98 / NVH 391-98).